We begin with the raw amino-acid sequence, 306 residues long: Agmatinase (306 aa).

Positions 126, 149, 151, 153, 230, and 232 each coordinate Mn(2+).

The protein belongs to the arginase family. Agmatinase subfamily. Requires Mn(2+) as cofactor.

The catalysed reaction is agmatine + H2O = urea + putrescine. The protein operates within amine and polyamine biosynthesis; putrescine biosynthesis via agmatine pathway; putrescine from agmatine: step 1/1. Its function is as follows. Catalyzes the formation of putrescine from agmatine. The chain is Agmatinase from Escherichia coli O7:K1 (strain IAI39 / ExPEC).